The chain runs to 927 residues: Band 3 anion transport protein (927 aa).

Met1 carries the N-acetylmethionine modification. Over 1–420 (MGDMQDHEKV…LSDITDALSP (420 aa)) the chain is Cytoplasmic. A Phosphoserine modification is found at Ser18. Residues Tyr31 and Tyr56 each carry the phosphotyrosine modification. A globular region spans residues 69-303 (SQVYVELQEL…LGRAAATLMT (235 aa)). The tract at residues 190–199 (AVLTRSGAPS) is interaction with ANK1. Phosphoserine is present on residues Ser199 and Ser222. A dimerization arm region spans residues 317–370 (RGELLSSLDSFLDCSLVLPPTEAPSEKALLNLVPVQKELLRKRYLPRPAKPDPN). The tract at residues 367 to 390 (PDPNLYEALDGGKEGPGDEDDPLR) is disordered. Tyr372 carries the phosphotyrosine modification. The chain crosses the membrane as a helical span at residues 421–444 (QVLAAVIFIYFAALSPAVTFGGLL). The Extracellular portion of the chain corresponds to 445-452 (GEKTRNLM). Residues 453–473 (GVSELLISTAVQGILFALLGA) form a helical membrane-spanning segment. Over 474 to 476 (QPL) the chain is Cytoplasmic. A discontinuously helical membrane pass occupies residues 477–493 (LVLGFSGPLLVFEEAFY). Residues 494-502 (SFCESNNLE) lie on the Extracellular side of the membrane. The helical transmembrane segment at 503–523 (YIVGRAWIGFWLILLVVLVVA) threads the bilayer. Residues 524–535 (FEGSFLVQYISR) are Cytoplasmic-facing. A helical membrane pass occupies residues 536–558 (YTQEIFSFLISLIFIYETFSKLI). Over 559–586 (KIFQDYPLQESYAPVVMKPKPQGPVPNT) the chain is Extracellular. A helical membrane pass occupies residues 587–607 (ALLSLVLMVGTFLLAMMLRKF). Over 608–618 (KNSTYFPGKLR) the chain is Cytoplasmic. The helical transmembrane segment at 619–639 (RVIGDFGVPISILIMVLVDTF) threads the bilayer. The Extracellular portion of the chain corresponds to 640–679 (IKNTYTQKLSVPDGLKVSNSSARGWVIHPLGLYNHFPKWM). The N-linked (GlcNAc...) asparagine glycan is linked to Asn658. Residues 680–700 (MFASVLPALLVFILIFLESQI) traverse the membrane as a helical segment. Residues 701–716 (TTLIVSKPERKMIKGS) are Cytoplasmic-facing. The chain crosses the membrane as a helical span at residues 717–735 (GFHLDLLLVVGMGGVAALF). Residues 736-753 (GMPWLSATTVRSVTHANA) form a discontinuously helical membrane-spanning segment. Residues 754-776 (LTVMGKASGPGAAAQIQEVKEQR) lie on the Cytoplasmic side of the membrane. 2 helical membrane passes run 777-797 (ISGL…PILS) and 798-816 (RIPL…ITSL). At 817–854 (SGIQLFDRILLLFKPPKYHPDVPFVKRVKTWRMHLFTG) the chain is on the cytoplasmic side. The discontinuously helical intramembrane region spans 855-885 (IQIICLAVLWVVKSTPASLALPFVLILTVPL). Cys859 carries the S-palmitoyl cysteine lipid modification. At 886-927 (RRLLLPLIFRELELQCLDGDDAKVTFDEAEGLDEYDEVPMPV) the chain is on the cytoplasmic side. The residue at position 920 (Tyr920) is a Phosphotyrosine.

Belongs to the anion exchanger (TC 2.A.31) family. In terms of assembly, a dimer in solution, but in its membrane environment, it exists primarily as a mixture of dimers and tetramers and spans the membrane asymmetrically. Component of the ankyrin-1 complex in the erythrocyte, composed of ANK1, RHCE, RHAG, SLC4A1, EPB42, GYPA, GYPB and AQP1. Interacts with STOM; this interaction positively regulates SLC4A1 activity. Interacts with GYPA; a GYPA monomer is bound at each end of the SLC4A1 dimer forming a heterotetramer. Three SLC4A1 dimers (Band 3-I, Band 3-II and Band 3-III) participates in the ankyrin-1 complex. Interacts (via the cytoplasmic domain) with EPB42; this interaction is mediated by the SLC4A1 Band 3-I dimer. Interacts (via the cytoplasmic domain) directly with ANK1; this interaction is mediated by the SLC4A1 Band 3-II and Band 3-III dimers. Interacts with TMEM139. In terms of tissue distribution, kidney.

The protein resides in the cell membrane. The protein localises to the basolateral cell membrane. It catalyses the reaction hydrogencarbonate(in) + chloride(out) = hydrogencarbonate(out) + chloride(in). Functions both as a transporter that mediates electroneutral anion exchange across the cell membrane and as a structural protein. Component of the ankyrin-1 complex of the erythrocyte membrane; required for normal flexibility and stability of the erythrocyte membrane and for normal erythrocyte shape via the interactions of its cytoplasmic domain with cytoskeletal proteins, glycolytic enzymes, and hemoglobin. Functions as a transporter that mediates the 1:1 exchange of inorganic anions across the erythrocyte membrane. Mediates chloride-bicarbonate exchange in the kidney, and is required for normal acidification of the urine. The chain is Band 3 anion transport protein from Rattus norvegicus (Rat).